We begin with the raw amino-acid sequence, 453 residues long: Plasmepsin II (453 aa).

The Cytoplasmic portion of the chain corresponds to 1 to 37 (MDITVREHDFKHGFIKSNSTFDGLNIDNSKNKKKIQK). Positions 1 to 124 (MDITVREHDF…SGLTKTNYLG (124 aa)) are excised as a propeptide. Residues 38–58 (GFQILYVLLFCSVMCGLFYYV) traverse the membrane as a helical; Signal-anchor for type II membrane protein segment. Residues 59–453 (YENVWLQRDN…VGIALAKKNL (395 aa)) are Lumenal-facing. The Peptidase A1 domain maps to 140-447 (FYGDAEVGDN…DYDNHSVGIA (308 aa)). Aspartate 158 is an active-site residue. Cysteine 171 and cysteine 176 are oxidised to a cystine. Aspartate 338 is a catalytic residue. Cysteine 373 and cysteine 409 are disulfide-bonded.

The protein belongs to the peptidase A1 family. As to quaternary structure, component of the hemozoin formation complex (HFC) composed of falcipains FP2A and/or FP2B, plasmepsins PMII, PMIII/HAP and PMIV, heme detoxifying protein HDP and falcilysin FLN. The HFC complex is involved in hemoglobin degradation and detoxification of heme in the food vacuole during the asexual blood stage. Not N-glycosylated. Post-translationally, proteolytically cleaved into the soluble active mature form in the digestive vacuole by cysteine protease falcipains; the process begins at the early ring stage. Proteolysis requires an acidic environment. In absence of falcipains, autoprocessing may serve as an alternate activation system.

Its subcellular location is the membrane. The protein localises to the vacuole lumen. It is found in the vacuole membrane. The enzyme catalyses Hydrolysis of the bonds linking certain hydrophobic residues in hemoglobin or globin. Also cleaves small molecules substrates such as Ala-Leu-Glu-Arg-Thr-Phe-|-Phe(NO2)-Ser-Phe-Pro-Thr.. With respect to regulation, inhibited by pepstatin A. Functionally, during the asexual blood stage, participates in initial cleavage of native host hemoglobin (Hb) resulting in Hb denaturation. May cleave preferentially denatured hemoglobin that has been cleaved by PMI. Digestion of host Hb is an essential step which provides the parasite with amino acids for protein synthesis, and regulates osmolarity. This chain is Plasmepsin II, found in Plasmodium falciparum (isolate HB3).